The sequence spans 714 residues: Protein BLISTER (714 aa).

Disordered regions lie at residues 1-113 (MASA…VDFS), 219-261 (SSYL…KRSR), 288-325 (VTSS…ASDY), and 519-576 (MVQK…SSNT). The span at 8 to 33 (RRQEDVEAGRRKLEQFRKRKAAEKAK) shows a compositional bias: basic and acidic residues. 2 stretches are compositionally biased toward polar residues: residues 36–50 (SQNT…QSVI) and 58–74 (SISN…TSNE). The span at 92 to 102 (DGSKERSRQDD) shows a compositional bias: basic and acidic residues. Polar residues-rich tracts occupy residues 219–253 (SSYL…SAKS), 288–297 (VTSSGSQLSG), 313–322 (NGPSSLTSGA), and 519–561 (MVQK…SSNQ). Positions 356–525 (NDDFTALEQH…LQTMVQKASS (170 aa)) form a coiled coil. Residues 562–576 (ETDSTTLLESDSSNT) show a composition bias toward low complexity.

Interacts with CLF. Expressed in root tips, emerging lateral roots, shoot apical meristem (SAM), vasculature of cotyledons, leaves, sepals and carpels.

It localises to the nucleus. It is found in the cytoplasm. In terms of biological role, is required for normal leaf, flower and seed development and controls cotyledon and leaf patterning by inhibiting premature differentiation. Regulates the expression of a subset of PcG target genes. Is required for the repression of the floral specific genes PI, SEP2, and SEP3, but also for the activation of FLC. Involved in response to cold. Involved in the regulation of COR15A, COR15B, BAM3 and AMY3 transcripts, and ascorbate levels in response to prolonged chilling temperatures. The chain is Protein BLISTER from Arabidopsis thaliana (Mouse-ear cress).